The chain runs to 269 residues: Interleukin-1 beta (269 aa).

Residues 1–112 (MAMVPEITCD…EEPITFKNCD (112 aa)) constitute a propeptide that is removed on maturation.

Belongs to the IL-1 family. In terms of assembly, monomer. In its precursor form, weakly interacts with full-length MEFV; the mature cytokine does not interact at all. Interacts with integrins ITGAV:ITGBV and ITGA5:ITGB1; integrin-binding is required for IL1B signaling. Interacts with cargo receptor TMED10; the interaction is direct and is required for the secretion of IL1B mature form. Interacts with HSP90AB1; the interaction facilitates cargo translocation into the ERGIC. Interacts with HSP90B1; the interaction facilitates cargo translocation into the ERGIC.

It localises to the cytoplasm. It is found in the cytosol. The protein resides in the secreted. The protein localises to the lysosome. Its subcellular location is the extracellular exosome. Its function is as follows. Potent pro-inflammatory cytokine. Initially discovered as the major endogenous pyrogen, induces prostaglandin synthesis, neutrophil influx and activation, T-cell activation and cytokine production, B-cell activation and antibody production, and fibroblast proliferation and collagen production. Promotes Th17 differentiation of T-cells. Synergizes with IL12/interleukin-12 to induce IFNG synthesis from T-helper 1 (Th1) cells. Plays a role in angiogenesis by inducing VEGF production synergistically with TNF and IL6. Involved in transduction of inflammation downstream of pyroptosis: its mature form is specifically released in the extracellular milieu by passing through the gasdermin-D (GSDMD) pore. The protein is Interleukin-1 beta (IL1B) of Trichosurus vulpecula (Brush-tailed possum).